The sequence spans 423 residues: Histidine--tRNA ligase 2 (423 aa).

This sequence belongs to the class-II aminoacyl-tRNA synthetase family. In terms of assembly, homodimer.

It is found in the cytoplasm. The enzyme catalyses tRNA(His) + L-histidine + ATP = L-histidyl-tRNA(His) + AMP + diphosphate + H(+). In Bacillus anthracis, this protein is Histidine--tRNA ligase 2.